The chain runs to 194 residues: CMRF35-like molecule 5 (194 aa).

A signal peptide spans 1–18; that stretch reads MWLSPSLLLLILPGYSIA. The 107-residue stretch at 19–125 folds into the Ig-like V-type domain; the sequence is AKITGPTTVN…LGVKVQVTIN (107 aa). Residues 19–165 are Extracellular-facing; that stretch reads AKITGPTTVN…LTRSPLKSTH (147 aa). N-linked (GlcNAc...) asparagine glycosylation occurs at Asn28. Cys39 and Cys107 form a disulfide bridge. Residues 166–186 form a helical membrane-spanning segment; the sequence is FLFLFLLELPLLLSMLGTVLW. Residues 187–194 lie on the Cytoplasmic side of the membrane; sequence VNRPQRRS.

It belongs to the CD300 family. In terms of assembly, forms complexes with the CD300 family members with exception of CD300c. N-glycosylated. As to expression, expression seems restricted to cells of myeloid lineage.

The protein resides in the cell membrane. The sequence is that of CMRF35-like molecule 5 (CD300LD) from Homo sapiens (Human).